A 623-amino-acid polypeptide reads, in one-letter code: Xaa-Pro aminopeptidase 1 (623 aa).

Arg-77 is a binding site for a peptide. Lys-304 bears the N6-acetyllysine mark. His-395 lines the a peptide pocket. Residues Asp-415, Asp-426, and His-489 each contribute to the Mn(2+) site. The a peptide site is built by His-489, His-498, and Glu-523. Positions 523 and 537 each coordinate Mn(2+).

It belongs to the peptidase M24B family. In terms of assembly, homodimer. Mn(2+) serves as cofactor.

It is found in the cytoplasm. Its subcellular location is the cytosol. It catalyses the reaction Release of any N-terminal amino acid, including proline, that is linked to proline, even from a dipeptide or tripeptide.. Its function is as follows. Metalloaminopeptidase that catalyzes the removal of a penultimate prolyl residue from the N-termini of peptides, such as Arg-Pro-Pro. Contributes to the degradation of bradykinin. The polypeptide is Xaa-Pro aminopeptidase 1 (Mus musculus (Mouse)).